The chain runs to 358 residues: Alanine racemase (358 aa).

Lys35 acts as the Proton acceptor; specific for D-alanine in catalysis. N6-(pyridoxal phosphate)lysine is present on Lys35. Arg130 is a binding site for substrate. The Proton acceptor; specific for L-alanine role is filled by Tyr255. Met303 lines the substrate pocket.

It belongs to the alanine racemase family. Pyridoxal 5'-phosphate serves as cofactor.

It catalyses the reaction L-alanine = D-alanine. Its pathway is amino-acid biosynthesis; D-alanine biosynthesis; D-alanine from L-alanine: step 1/1. Its function is as follows. Catalyzes the interconversion of L-alanine and D-alanine. May also act on other amino acids. The protein is Alanine racemase (alr) of Shewanella piezotolerans (strain WP3 / JCM 13877).